The sequence spans 539 residues: GMP synthase [glutamine-hydrolyzing] (539 aa).

The region spanning 4–203 (KILILDFGSQ…VHDICGCKSD (200 aa)) is the Glutamine amidotransferase type-1 domain. C82 serves as the catalytic Nucleophile. Catalysis depends on residues H177 and E179. Positions 204 to 395 (WNMPDYIAEA…LGLPHDMVYR (192 aa)) constitute a GMPS ATP-PPase domain. Position 231-237 (231-237 (SGGVDSS)) interacts with ATP.

In terms of assembly, homodimer.

The enzyme catalyses XMP + L-glutamine + ATP + H2O = GMP + L-glutamate + AMP + diphosphate + 2 H(+). It participates in purine metabolism; GMP biosynthesis; GMP from XMP (L-Gln route): step 1/1. Catalyzes the synthesis of GMP from XMP. This chain is GMP synthase [glutamine-hydrolyzing], found in Herminiimonas arsenicoxydans.